The following is a 141-amino-acid chain: Large ribosomal subunit protein uL11 (141 aa).

It belongs to the universal ribosomal protein uL11 family. As to quaternary structure, part of the ribosomal stalk of the 50S ribosomal subunit. Interacts with L10 and the large rRNA to form the base of the stalk. L10 forms an elongated spine to which L12 dimers bind in a sequential fashion forming a multimeric L10(L12)X complex. One or more lysine residues are methylated.

Forms part of the ribosomal stalk which helps the ribosome interact with GTP-bound translation factors. The protein is Large ribosomal subunit protein uL11 of Geobacillus thermodenitrificans (strain NG80-2).